We begin with the raw amino-acid sequence, 375 residues long: Succinyl-diaminopimelate desuccinylase (375 aa).

His-66 contacts Zn(2+). Asp-68 is a catalytic residue. Position 99 (Asp-99) interacts with Zn(2+). The Proton acceptor role is filled by Glu-133. 3 residues coordinate Zn(2+): Glu-134, Glu-162, and His-348.

It belongs to the peptidase M20A family. DapE subfamily. Homodimer. The cofactor is Zn(2+). Co(2+) serves as cofactor.

The catalysed reaction is N-succinyl-(2S,6S)-2,6-diaminopimelate + H2O = (2S,6S)-2,6-diaminopimelate + succinate. It functions in the pathway amino-acid biosynthesis; L-lysine biosynthesis via DAP pathway; LL-2,6-diaminopimelate from (S)-tetrahydrodipicolinate (succinylase route): step 3/3. Catalyzes the hydrolysis of N-succinyl-L,L-diaminopimelic acid (SDAP), forming succinate and LL-2,6-diaminopimelate (DAP), an intermediate involved in the bacterial biosynthesis of lysine and meso-diaminopimelic acid, an essential component of bacterial cell walls. This Shigella sonnei (strain Ss046) protein is Succinyl-diaminopimelate desuccinylase.